The primary structure comprises 124 residues: Fluoride-specific ion channel FluC (124 aa).

4 helical membrane passes run 4–24 (LLLV…ISIF), 35–55 (FGTL…YALG), 60–80 (ISPE…TTFS), and 102–122 (VVLN…LVFS). Residues glycine 74 and threonine 77 each coordinate Na(+).

This sequence belongs to the fluoride channel Fluc/FEX (TC 1.A.43) family.

It is found in the cell inner membrane. The catalysed reaction is fluoride(in) = fluoride(out). Its activity is regulated as follows. Na(+) is not transported, but it plays an essential structural role and its presence is essential for fluoride channel function. Fluoride-specific ion channel. Important for reducing fluoride concentration in the cell, thus reducing its toxicity. In Shewanella baltica (strain OS185), this protein is Fluoride-specific ion channel FluC.